The primary structure comprises 562 residues: Chaperonin GroEL 1 (562 aa).

Residues 30–33 (TLGP), lysine 51, 87–91 (DGTTT), glycine 415, 478–480 (NAA), and aspartate 494 each bind ATP.

Belongs to the chaperonin (HSP60) family. As to quaternary structure, forms a cylinder of 14 subunits composed of two heptameric rings stacked back-to-back. Interacts with the co-chaperonin GroES.

Its subcellular location is the cytoplasm. It carries out the reaction ATP + H2O + a folded polypeptide = ADP + phosphate + an unfolded polypeptide.. Together with its co-chaperonin GroES, plays an essential role in assisting protein folding. The GroEL-GroES system forms a nano-cage that allows encapsulation of the non-native substrate proteins and provides a physical environment optimized to promote and accelerate protein folding. In Sorangium cellulosum (strain So ce56) (Polyangium cellulosum (strain So ce56)), this protein is Chaperonin GroEL 1.